A 119-amino-acid polypeptide reads, in one-letter code: Large ribosomal subunit protein eL8 (119 aa).

The protein belongs to the eukaryotic ribosomal protein eL8 family. In terms of assembly, part of the 50S ribosomal subunit. Probably part of the RNase P complex.

Its subcellular location is the cytoplasm. Multifunctional RNA-binding protein that recognizes the K-turn motif in ribosomal RNA, the RNA component of RNase P, box H/ACA, box C/D and box C'/D' sRNAs. The polypeptide is Large ribosomal subunit protein eL8 (Archaeoglobus fulgidus (strain ATCC 49558 / DSM 4304 / JCM 9628 / NBRC 100126 / VC-16)).